The primary structure comprises 210 residues: Oligoribonuclease (210 aa).

The region spanning 12–177 (LVWIDLEMTG…ADIVESIREL (166 aa)) is the Exonuclease domain. Tyr134 is a catalytic residue.

It belongs to the oligoribonuclease family.

It is found in the cytoplasm. In terms of biological role, 3'-to-5' exoribonuclease specific for small oligoribonucleotides. This Corynebacterium diphtheriae (strain ATCC 700971 / NCTC 13129 / Biotype gravis) protein is Oligoribonuclease.